The chain runs to 245 residues: NAD-dependent protein deacylase (245 aa).

In terms of domain architecture, Deacetylase sirtuin-type spans 1-237 (MNFPYRNIVV…PKLVEELLAH (237 aa)). Residue 13-32 (GAGISAESGIQTFRAQDGLW) participates in NAD(+) binding. 2 residues coordinate substrate: Y57 and R60. 94–97 (QNID) is an NAD(+) binding site. Residue H112 is the Proton acceptor of the active site. The Zn(2+) site is built by C120 and C139. Residues 179–181 (GTS), 205–207 (NLE), and A223 each bind NAD(+).

The protein belongs to the sirtuin family. Class III subfamily. Zn(2+) is required as a cofactor.

The protein resides in the cytoplasm. The catalysed reaction is N(6)-acetyl-L-lysyl-[protein] + NAD(+) + H2O = 2''-O-acetyl-ADP-D-ribose + nicotinamide + L-lysyl-[protein]. It carries out the reaction N(6)-succinyl-L-lysyl-[protein] + NAD(+) + H2O = 2''-O-succinyl-ADP-D-ribose + nicotinamide + L-lysyl-[protein]. Its function is as follows. NAD-dependent lysine deacetylase and desuccinylase that specifically removes acetyl and succinyl groups on target proteins. Modulates the activities of several proteins which are inactive in their acylated form. The protein is NAD-dependent protein deacylase of Vibrio vulnificus (strain YJ016).